A 266-amino-acid polypeptide reads, in one-letter code: MPDILDKIMAVKRQEIAAAQKKSPLEAVRFDAESRVLTRDFEGALRTRIAAGHAAVIAEVKKASPSKGVLREDFIPADIAQSYAEGDGEISAACLSVLTDKQFFQGGVDYLKQARASCDLPVLRKDFIVDAYQVYESRAMGADAVLLIAACLDDAQMKDYEAIARGLGMAVLVEVHDAAELERALKLKTPLIGVNNRNLRNFEVSIQATIDLLPRLPADRLAVTESGIATREDVATLRAAGVHAFLVGEAFMRAKEPGEALAALFK.

It belongs to the TrpC family.

It catalyses the reaction 1-(2-carboxyphenylamino)-1-deoxy-D-ribulose 5-phosphate + H(+) = (1S,2R)-1-C-(indol-3-yl)glycerol 3-phosphate + CO2 + H2O. The protein operates within amino-acid biosynthesis; L-tryptophan biosynthesis; L-tryptophan from chorismate: step 4/5. The chain is Indole-3-glycerol phosphate synthase from Variovorax paradoxus (strain S110).